A 61-amino-acid polypeptide reads, in one-letter code: UPF0434 protein PFL_1779 (61 aa).

It belongs to the UPF0434 family.

This chain is UPF0434 protein PFL_1779, found in Pseudomonas fluorescens (strain ATCC BAA-477 / NRRL B-23932 / Pf-5).